A 376-amino-acid chain; its full sequence is 2-hydroxypropyl-CoM lyase (376 aa).

Zn(2+) is bound by residues His-218, Cys-220, and Cys-341.

It belongs to the vitamin-B12 independent methionine synthase family. As to quaternary structure, homohexamer. Component I of the aliphatic epoxide carboxylation complex together with components II, III and IV. Requires Zn(2+) as cofactor.

It carries out the reaction (R)-2-hydroxypropyl-coenzyme M = (R)-1,2-epoxypropane + coenzyme M. The catalysed reaction is (S)-2-hydroxypropyl-coenzyme M = (S)-1,2-epoxypropane + coenzyme M. The protein operates within alkene metabolism; propylene degradation. With respect to regulation, inhibited by methylepoxypropane. Inhibited by the zinc chelator 4-(2-pyridylazo)resorcinol (PAR), in the presence of p- (hydroxymercuri)benzenesulfonic acid (PMPS), and by EDTA. Not inhibited by the coenzyme M analog 2-bromoethanesulfonate (BES). Involved in aliphatic epoxide carboxylation. Catalyzes the addition of coenzyme M (CoM) to either R- or S-epoxypropane to form the thioether conjugate 2-hydroxypropyl-CoM. Catalyzes the reaction of CoM with R-epoxypropane at a rate approximately twice of that with S-epoxypropane. The CoM analogs 2-mercaptopropionate, 2-mercaptoethanol and cysteine substitute poorly for CoM as the thiol substrate. The chain is 2-hydroxypropyl-CoM lyase from Xanthobacter autotrophicus (strain ATCC BAA-1158 / Py2).